The following is a 225-amino-acid chain: Dynein axonemal assembly factor 19 (225 aa).

Residues 8–32 are a coiled coil; sequence DFRELERELANALAADQKYSRENDA.

This sequence belongs to the DNAAF19/PR46b family. Homodimer.

The protein localises to the cytoplasm. It is found in the cell projection. Its subcellular location is the cilium. The protein resides in the flagellum. Its function is as follows. Dynein-attachment factor required for cilia motility. This is Dynein axonemal assembly factor 19 (dnaaf19) from Xenopus tropicalis (Western clawed frog).